Here is a 611-residue protein sequence, read N- to C-terminus: Creatine transporter (611 aa).

A helical transmembrane segment spans residues 45–65; the sequence is FIMSCVGFAVGLGNVWRFPYL. Topologically, residues 66–71 are extracellular; the sequence is CYKNGG. A helical transmembrane segment spans residues 72–92; it reads GVFLIPYLLVAVFGGIPIFFL. Topologically, residues 93 to 122 are cytoplasmic; that stretch reads EISLGQFMKAGGINAWNIAPLFKGLGYASM. The chain crosses the membrane as a helical span at residues 123 to 143; that stretch reads VIVFFCNTYYILVLTWSSFYL. The Extracellular portion of the chain corresponds to 144–207; it reads VQSFSSPLPW…LSSGLGDVGE (64 aa). Asparagine 157 and asparagine 171 each carry an N-linked (GlcNAc...) asparagine glycan. The helical transmembrane segment at 208–228 threads the bilayer; that stretch reads IGWELTLCLTATWMLVYFCIW. Over 229-246 the chain is Cytoplasmic; that stretch reads KGVKTSGKVVYVTATFPY. The chain crosses the membrane as a helical span at residues 247 to 267; that stretch reads IILVILLVRGVTLHGAVQGIV. Over 268 to 281 the chain is Extracellular; it reads YYLQPDWGKLGEAQ. The helical transmembrane segment at 282–302 threads the bilayer; sequence VWIDAGTQIFFSYAIGLGTLT. The Cytoplasmic portion of the chain corresponds to 303-318; it reads ALGSYNQLHNDCYKDA. Residues 319 to 339 form a helical membrane-spanning segment; the sequence is FILSLVNSATSFFAGLVVFSI. The Extracellular segment spans residues 340 to 371; it reads LGFMAVEEGVDISVVAESGPGLAFIAYPKAVT. Residues 372 to 392 form a helical membrane-spanning segment; sequence LMPFPQVWAVLFFIMLLCLGL. The Cytoplasmic segment spans residues 393–421; that stretch reads GSQFVGVEGFVTAILDLWPSKFSFRYLRE. A helical transmembrane segment spans residues 422-442; it reads VVVAMVICLSFLIDLSMITEG. Residues 443–456 lie on the Extracellular side of the membrane; that stretch reads GMYIFQIFDYYSAS. Residues 457–477 traverse the membrane as a helical segment; it reads GTTLLWTAFWECVAVAWVYGG. The Cytoplasmic segment spans residues 478-497; it reads DRYLDDLAWMLGYRPWALVK. The chain crosses the membrane as a helical span at residues 498-518; the sequence is WCWSVITPLVCMGIFTFHLVN. Over 519–537 the chain is Extracellular; that stretch reads YKPLTYNKTYTYPWWGEAI. N-linked (GlcNAc...) asparagine glycosylation occurs at asparagine 525. The chain crosses the membrane as a helical span at residues 538 to 558; it reads GWCLALASMLCVPTTVLYSLS. Residues 559–611 are Cytoplasmic-facing; it reads RGRGSLKERWRKLTTPVWASHHLAYKMAGAKINQPCEGVVSCEEKVVIFESVL.

This sequence belongs to the sodium:neurotransmitter symporter (SNF) (TC 2.A.22) family.

The protein localises to the membrane. Required for the uptake of creatine. This Torpedo marmorata (Marbled electric ray) protein is Creatine transporter.